A 304-amino-acid polypeptide reads, in one-letter code: Homoserine kinase (304 aa).

90–100 (PLARGLGSSAS) lines the ATP pocket.

The protein belongs to the GHMP kinase family. Homoserine kinase subfamily.

It is found in the cytoplasm. The enzyme catalyses L-homoserine + ATP = O-phospho-L-homoserine + ADP + H(+). It participates in amino-acid biosynthesis; L-threonine biosynthesis; L-threonine from L-aspartate: step 4/5. Functionally, catalyzes the ATP-dependent phosphorylation of L-homoserine to L-homoserine phosphate. This chain is Homoserine kinase, found in Staphylococcus aureus (strain bovine RF122 / ET3-1).